Consider the following 310-residue polypeptide: 4-diphosphocytidyl-2-C-methyl-D-erythritol kinase (310 aa).

Residue K12 is part of the active site. 97–107 (PIGAGLAGGSS) is a binding site for ATP. D139 is a catalytic residue.

The protein belongs to the GHMP kinase family. IspE subfamily.

It catalyses the reaction 4-CDP-2-C-methyl-D-erythritol + ATP = 4-CDP-2-C-methyl-D-erythritol 2-phosphate + ADP + H(+). The protein operates within isoprenoid biosynthesis; isopentenyl diphosphate biosynthesis via DXP pathway; isopentenyl diphosphate from 1-deoxy-D-xylulose 5-phosphate: step 3/6. In terms of biological role, catalyzes the phosphorylation of the position 2 hydroxy group of 4-diphosphocytidyl-2C-methyl-D-erythritol. The sequence is that of 4-diphosphocytidyl-2-C-methyl-D-erythritol kinase from Synechococcus sp. (strain CC9311).